The primary structure comprises 956 residues: Probable hypoxanthine oxidase XdhD (956 aa).

Mo-molybdopterin is bound by residues Gln-414, Phe-445, and Ala-727.

Belongs to the xanthine dehydrogenase family. [2Fe-2S] cluster serves as cofactor. Mo-molybdopterin is required as a cofactor.

Probably has no xanthine dehydrogenase activity; however deletion results in increased adenine sensitivity, suggesting that this protein contributes to the conversion of adenine to guanine nucleotides during purine salvage. This Escherichia coli O157:H7 protein is Probable hypoxanthine oxidase XdhD (xdhD).